The chain runs to 177 residues: ATP-dependent protease subunit HslV (177 aa).

Residue threonine 2 is part of the active site. The Na(+) site is built by glycine 158, cysteine 161, and threonine 164.

This sequence belongs to the peptidase T1B family. HslV subfamily. In terms of assembly, a double ring-shaped homohexamer of HslV is capped on each side by a ring-shaped HslU homohexamer. The assembly of the HslU/HslV complex is dependent on binding of ATP.

It is found in the cytoplasm. The catalysed reaction is ATP-dependent cleavage of peptide bonds with broad specificity.. Its activity is regulated as follows. Allosterically activated by HslU binding. Functionally, protease subunit of a proteasome-like degradation complex believed to be a general protein degrading machinery. The chain is ATP-dependent protease subunit HslV from Pseudomonas aeruginosa (strain LESB58).